A 349-amino-acid chain; its full sequence is DNA polymerase IV (349 aa).

One can recognise a UmuC domain in the interval 7–188; sequence IIHIDMDYFF…LPVKKLFGVG (182 aa). Residues Asp11 and Asp106 each contribute to the Mg(2+) site. The active site involves Glu107.

This sequence belongs to the DNA polymerase type-Y family. As to quaternary structure, monomer. Mg(2+) serves as cofactor.

It localises to the cytoplasm. The enzyme catalyses DNA(n) + a 2'-deoxyribonucleoside 5'-triphosphate = DNA(n+1) + diphosphate. Functionally, poorly processive, error-prone DNA polymerase involved in untargeted mutagenesis. Copies undamaged DNA at stalled replication forks, which arise in vivo from mismatched or misaligned primer ends. These misaligned primers can be extended by PolIV. Exhibits no 3'-5' exonuclease (proofreading) activity. May be involved in translesional synthesis, in conjunction with the beta clamp from PolIII. The sequence is that of DNA polymerase IV from Francisella tularensis subsp. holarctica (strain OSU18).